The primary structure comprises 174 residues: Small heat shock protein OV25-1 (174 aa).

A sHSP domain is found at 50–161 (LNECNIGNTL…ASRNIPIRAS (112 aa)). The tract at residues 153–174 (SRNIPIRASPKEPEAKQKTKKQ) is disordered. Positions 161–174 (SPKEPEAKQKTKKQ) are enriched in basic and acidic residues.

This sequence belongs to the small heat shock protein (HSP20) family.

The protein is Small heat shock protein OV25-1 (OV25-1) of Onchocerca volvulus.